Here is a 241-residue protein sequence, read N- to C-terminus: tRNA (guanine-N(7)-)-methyltransferase (241 aa).

Residues 1 to 20 (MTESNDTPIQPEAGDERQHR) are disordered. Residues E71, E96, D123, and D146 each contribute to the S-adenosyl-L-methionine site. D146 is an active-site residue. Substrate-binding positions include K150, D182, and 219–222 (TKFE).

It belongs to the class I-like SAM-binding methyltransferase superfamily. TrmB family.

It carries out the reaction guanosine(46) in tRNA + S-adenosyl-L-methionine = N(7)-methylguanosine(46) in tRNA + S-adenosyl-L-homocysteine. Its pathway is tRNA modification; N(7)-methylguanine-tRNA biosynthesis. In terms of biological role, catalyzes the formation of N(7)-methylguanine at position 46 (m7G46) in tRNA. The sequence is that of tRNA (guanine-N(7)-)-methyltransferase from Pseudomonas fluorescens (strain ATCC BAA-477 / NRRL B-23932 / Pf-5).